Consider the following 66-residue polypeptide: Large ribosomal subunit protein bL35 (66 aa).

Residues 1-42 (MPKQKTHRASAKRFKRTANGGLKRHHAYTGHRFHGKTKKQRR) are disordered.

Belongs to the bacterial ribosomal protein bL35 family.

This Lactobacillus gasseri (strain ATCC 33323 / DSM 20243 / BCRC 14619 / CIP 102991 / JCM 1131 / KCTC 3163 / NCIMB 11718 / NCTC 13722 / AM63) protein is Large ribosomal subunit protein bL35.